The following is a 430-amino-acid chain: Glutamate-1-semialdehyde 2,1-aminomutase (430 aa).

Residue K265 is modified to N6-(pyridoxal phosphate)lysine.

The protein belongs to the class-III pyridoxal-phosphate-dependent aminotransferase family. HemL subfamily. Pyridoxal 5'-phosphate serves as cofactor.

The protein resides in the cytoplasm. The catalysed reaction is (S)-4-amino-5-oxopentanoate = 5-aminolevulinate. The protein operates within porphyrin-containing compound metabolism; protoporphyrin-IX biosynthesis; 5-aminolevulinate from L-glutamyl-tRNA(Glu): step 2/2. This is Glutamate-1-semialdehyde 2,1-aminomutase from Caldivirga maquilingensis (strain ATCC 700844 / DSM 13496 / JCM 10307 / IC-167).